Here is a 114-residue protein sequence, read N- to C-terminus: Ribosome-binding factor A (114 aa).

The protein belongs to the RbfA family. Monomer. Binds 30S ribosomal subunits, but not 50S ribosomal subunits or 70S ribosomes.

It is found in the cytoplasm. Functionally, one of several proteins that assist in the late maturation steps of the functional core of the 30S ribosomal subunit. Associates with free 30S ribosomal subunits (but not with 30S subunits that are part of 70S ribosomes or polysomes). Required for efficient processing of 16S rRNA. May interact with the 5'-terminal helix region of 16S rRNA. The sequence is that of Ribosome-binding factor A from Listeria welshimeri serovar 6b (strain ATCC 35897 / DSM 20650 / CCUG 15529 / CIP 8149 / NCTC 11857 / SLCC 5334 / V8).